The sequence spans 133 residues: Phosphomevalonate dehydratase small subunit (133 aa).

The Proton acceptor role is filled by S62.

Belongs to the AcnX type II small subunit family. As to quaternary structure, heterodimer composed of a large subunit (PMDh-L) and a small subunit (PMDh-S).

It catalyses the reaction (R)-5-phosphomevalonate = (2E)-3-methyl-5-phosphooxypent-2-enoate + H2O. It participates in isoprenoid biosynthesis; isopentenyl diphosphate biosynthesis via mevalonate pathway. In terms of biological role, component of a hydro-lyase that catalyzes the dehydration of mevalonate 5-phosphate (MVA5P) to form trans-anhydromevalonate 5-phosphate (tAHMP). Involved in the archaeal mevalonate (MVA) pathway, which provides fundamental precursors for isoprenoid biosynthesis, such as isopentenyl diphosphate (IPP) and dimethylallyl diphosphate (DMAPP). This chain is Phosphomevalonate dehydratase small subunit, found in Thermococcus kodakarensis (strain ATCC BAA-918 / JCM 12380 / KOD1) (Pyrococcus kodakaraensis (strain KOD1)).